A 560-amino-acid chain; its full sequence is NADH-quinone oxidoreductase subunit C/D (560 aa).

Residues 2 to 157 are NADH dehydrogenase I subunit C; that stretch reads NKLENLKQLL…NNQQACTNSL (156 aa). The segment at 175 to 560 is NADH dehydrogenase I subunit D; that stretch reads KYLPLNIGPS…MNLIAGELDR (386 aa).

The protein in the N-terminal section; belongs to the complex I 30 kDa subunit family. This sequence in the C-terminal section; belongs to the complex I 49 kDa subunit family. As to quaternary structure, NDH-1 is composed of 13 different subunits. Subunits NuoB, CD, E, F, and G constitute the peripheral sector of the complex.

It localises to the cytoplasm. It is found in the cell inner membrane. It catalyses the reaction a quinone + NADH + 5 H(+)(in) = a quinol + NAD(+) + 4 H(+)(out). In terms of biological role, NDH-1 shuttles electrons from NADH, via FMN and iron-sulfur (Fe-S) centers, to quinones in the respiratory chain. The immediate electron acceptor for the enzyme in this species is believed to be ubiquinone. Couples the redox reaction to proton translocation (for every two electrons transferred, four hydrogen ions are translocated across the cytoplasmic membrane), and thus conserves the redox energy in a proton gradient. This is NADH-quinone oxidoreductase subunit C/D from Bdellovibrio bacteriovorus (strain ATCC 15356 / DSM 50701 / NCIMB 9529 / HD100).